Reading from the N-terminus, the 684-residue chain is U4/U6 small nuclear ribonucleoprotein Prp3 (684 aa).

Residues 1 to 87 (MSLSKRELDE…HSKSNSDRNR (87 aa)) form the PWI domain. Residues 73–107 (GRSSRHSKSNSDRNRKRELKDVFGDDSEVSKESSG) are compositionally biased toward basic and acidic residues. 2 disordered regions span residues 73–109 (GRSS…SGVK) and 162–183 (FISP…RLPI). Polar residues predominate over residues 170-183 (PKISSSSQSERLPI).

Component of the precatalytic spliceosome (spliceosome B complex). Component of the U4/U6-U5 tri-snRNP complex, a building block of the precatalytic spliceosome (spliceosome B complex). The U4/U6-U5 tri-snRNP complex is composed of the U4, U6 and U5 snRNAs and at least PRPF3, PRPF4, PRPF6, PRPF8, PRPF31, SNRNP200, TXNL4A, SNRNP40, SNRPB, SNRPD1, SNRPD2, SNRPD3, SNRPE, SNRPF, SNRPG, DDX23, CD2BP2, PPIH, SNU13, EFTUD2, SART1 and USP39, plus LSM2, LSM3, LSM4, LSM5, LSM6, LSM7 and LSM8.

The protein resides in the nucleus. It localises to the nucleus speckle. In terms of biological role, plays a role in pre-mRNA splicing as component of the U4/U6-U5 tri-snRNP complex that is involved in spliceosome assembly, and as component of the precatalytic spliceosome (spliceosome B complex). The polypeptide is U4/U6 small nuclear ribonucleoprotein Prp3 (PRPF3) (Gallus gallus (Chicken)).